The primary structure comprises 627 residues: Sphingomyelin phosphodiesterase (627 aa).

The signal sequence occupies residues 1-44; that stretch reads MPHHRASSGQDHLRAGWEQRLERSLPAPRVGLLWMGLGLALVLA. The Saposin B-type domain occupies 83–167; that stretch reads QNLTCPACKV…LLGSSCGHWD (85 aa). Residue N84 is glycosylated (N-linked (GlcNAc...) asparagine). 3 disulfide bridges follow: C87-C163, C90-C155, and C118-C129. N173 carries an N-linked (GlcNAc...) asparagine glycan. Residues D204 and H206 each contribute to the Zn(2+) site. 2 disulfides stabilise this stretch: C219/C224 and C225/C248. 2 residues coordinate Zn(2+): D276 and N316. N-linked (GlcNAc...) asparagine glycosylation is found at N333 and N393. C383 and C429 are disulfide-bonded. 3 residues coordinate Zn(2+): H423, H455, and H457. S506 carries the post-translational modification Phosphoserine. N518 carries N-linked (GlcNAc...) asparagine glycosylation. Cystine bridges form between C582–C586 and C592–C605. The N-linked (GlcNAc...) asparagine glycan is linked to N611.

Belongs to the acid sphingomyelinase family. Monomer. Interacts with SORT1; the interaction is required for SMPD1 targeting to lysosomes. Zn(2+) is required as a cofactor. Proteolytically processed. Mature lysosomal form arises from C-terminal proteolytic processing of pro-sphingomyelin phosphodiesterase. Post-translationally, both lysosomal and secreted forms are glycosylated but they show a differential pattern of glycosylation. In terms of processing, phosphorylated at Ser-506 by PRKCD upon stress stimuli. Phosphorylation is required for secretion. This form is generated following cleavage by CASP7 in the extracellular milieu. It shows increased activity.

The protein localises to the lysosome. It is found in the lipid droplet. It localises to the secreted. The protein resides in the extracellular space. It carries out the reaction a sphingomyelin + H2O = phosphocholine + an N-acylsphing-4-enine + H(+). It catalyses the reaction N-(octadecanoyl)-sphing-4-enine-1-phosphocholine + H2O = N-octadecanoylsphing-4-enine + phosphocholine + H(+). The enzyme catalyses a 1,2-diacyl-sn-glycero-3-phosphocholine + H2O = phosphocholine + a 1,2-diacyl-sn-glycerol + H(+). The catalysed reaction is 1,2-dihexadecanoyl-sn-glycero-3-phosphocholine + H2O = 1,2-dihexadecanoyl-sn-glycerol + phosphocholine + H(+). Hydrolysis of liposomal sphingomyelin is stimulated by incorporation of diacylglycerol (DAG), ceramide and free fatty acids into the liposomal membranes. Phosphatidylcholine hydrolysis is inhibited by incorporation of cholesterol, ceramide, DAG, monoacylglycerol and fatty acids. Functionally, converts sphingomyelin to ceramide. Exists as two enzymatic forms that arise from alternative trafficking of a single protein precursor, one that is targeted to the endolysosomal compartment, whereas the other is released extracellularly. However, in response to various forms of stress, lysosomal exocytosis may represent a major source of the secretory form. In the lysosomes, converts sphingomyelin to ceramide. Plays an important role in the export of cholesterol from the intraendolysosomal membranes. Also has phospholipase C activities toward 1,2-diacylglycerolphosphocholine and 1,2-diacylglycerolphosphoglycerol. Modulates stress-induced apoptosis through the production of ceramide. In terms of biological role, when secreted, modulates cell signaling with its ability to reorganize the plasma membrane by converting sphingomyelin to ceramide. Secreted form is increased in response to stress and inflammatory mediators such as IL1B, IFNG or TNF as well as upon infection with bacteria and viruses. Produces the release of ceramide in the outer leaflet of the plasma membrane playing a central role in host defense. Ceramide reorganizes these rafts into larger signaling platforms that are required to internalize P.aeruginosa, induce apoptosis and regulate the cytokine response in infected cells. In wounded cells, the lysosomal form is released extracellularly in the presence of Ca(2+) and promotes endocytosis and plasma membrane repair. Its function is as follows. This form is generated following cleavage by CASP7 in the extracellular milieu in response to bacterial infection. It shows increased ability to convert sphingomyelin to ceramide and promotes plasma membrane repair. Plasma membrane repair by ceramide counteracts the action of gasdermin-D (GSDMD) perforin (PRF1) pores that are formed in response to bacterial infection. Functionally, (Microbial infection) Secretion is activated by bacteria such as P.aeruginosa, this activation results in the release of ceramide in the outer leaflet of the plasma membrane which facilitates the infection. This Mus musculus (Mouse) protein is Sphingomyelin phosphodiesterase.